Here is a 633-residue protein sequence, read N- to C-terminus: Electron transfer flavoprotein-ubiquinone oxidoreductase, mitochondrial (633 aa).

The transit peptide at 1–90 directs the protein to the mitochondrion; that stretch reads MHRFLVKLSS…NGITSSRCIS (90 aa). Residue 102–116 participates in FAD binding; that stretch reads VLIVGAGPAGLSAAI. Residues 140-161 lie within the membrane without spanning it; that stretch reads VGGHIISGNVFEPLALDELLPH. A ubiquinone contacts are provided by Gly334 and Gly335. An intramembrane segment occupies 401 to 421; it reads IPYPVFPGGAIIGCSAGFLNV. Positions 578, 602, 605, and 608 each coordinate [4Fe-4S] cluster. The 30-residue stretch at 593 to 622 folds into the 4Fe-4S ferredoxin-type domain; sequence PKLQINAQNCLHCKACDIKDPKQNIEWTVP.

Belongs to the ETF-QO/FixC family. It depends on [4Fe-4S] cluster as a cofactor. Requires FAD as cofactor.

Its subcellular location is the mitochondrion inner membrane. The enzyme catalyses a ubiquinone + reduced [electron-transfer flavoprotein] = a ubiquinol + oxidized [electron-transfer flavoprotein] + H(+). Up-regulated by KIN10, by S1-bZIP specific dimers, and also by C/S1 bZIP heterodimers. Its function is as follows. Accepts electrons from ETF and reduces ubiquinone. May act downstream of IVD and D2HGDH in the degradation of phytol or chlorophyll during dark-induced senescence and sugar starvation. The polypeptide is Electron transfer flavoprotein-ubiquinone oxidoreductase, mitochondrial (ETFQO) (Arabidopsis thaliana (Mouse-ear cress)).